The sequence spans 495 residues: Glutamyl-tRNA(Gln) amidotransferase subunit A (495 aa).

Active-site charge relay system residues include K78 and S158. Residue S182 is the Acyl-ester intermediate of the active site.

The protein belongs to the amidase family. GatA subfamily. In terms of assembly, heterotrimer of A, B and C subunits.

It catalyses the reaction L-glutamyl-tRNA(Gln) + L-glutamine + ATP + H2O = L-glutaminyl-tRNA(Gln) + L-glutamate + ADP + phosphate + H(+). Allows the formation of correctly charged Gln-tRNA(Gln) through the transamidation of misacylated Glu-tRNA(Gln) in organisms which lack glutaminyl-tRNA synthetase. The reaction takes place in the presence of glutamine and ATP through an activated gamma-phospho-Glu-tRNA(Gln). This chain is Glutamyl-tRNA(Gln) amidotransferase subunit A, found in Dinoroseobacter shibae (strain DSM 16493 / NCIMB 14021 / DFL 12).